We begin with the raw amino-acid sequence, 299 residues long: Zinc finger protein 414 (299 aa).

Composition is skewed to polar residues over residues 1-20 (MEELSGPSSDTLATVESSSN) and 70-80 (SCQTSSTTRGV). Residues 1 to 102 (MEELSGPSSD…PPPGKQIPCS (102 aa)) are disordered. C2H2-type zinc fingers lie at residues 99 to 123 (IPCSSPGCSLSFPSVRDLAQHLRTH) and 135 to 159 (FRCSALSCTESFPSMQELVAHGKLH). A C2H2-type 3; degenerate zinc finger spans residues 166–190 (FKCENCLLRFRTHRSLFKHLHVCID). Disordered regions lie at residues 193–228 (QNPAPPPPPALDKEPPVPERPPESDPSSSLGLPFPL) and 254–299 (PRLR…GACR). Over residues 203-215 (LDKEPPVPERPPE) the composition is skewed to basic and acidic residues. Over residues 217–228 (DPSSSLGLPFPL) the composition is skewed to low complexity. The span at 268-285 (TSSTAIWKKSQGATSSPR) shows a compositional bias: polar residues.

This sequence belongs to the krueppel C2H2-type zinc-finger protein family.

It localises to the nucleus. Its function is as follows. May be involved in transcriptional regulation. The protein is Zinc finger protein 414 (Znf414) of Rattus norvegicus (Rat).